A 131-amino-acid polypeptide reads, in one-letter code: Profilin-2 (131 aa).

The protein belongs to the profilin family. Occurs in many kinds of cells as a complex with monomeric actin in a 1:1 ratio. As to expression, expressed in the intestinal wall, the spermatheca, and the pharynx.

It is found in the cytoplasm. It localises to the cytoskeleton. Functionally, binds to actin and affects the structure of the cytoskeleton. At high concentrations, profilin prevents the polymerization of actin, whereas it enhances it at low concentrations. By binding to PIP2, it inhibits the formation of IP3 and DG. The protein is Profilin-2 (pfn-2) of Caenorhabditis elegans.